The primary structure comprises 393 residues: MTNSNRIKLTWISFLSYALTGALVIVTGMVMGNIADYFHLPVSSMSNTFTFLNAGILISIFLNAWLMEIVPLKTQLRFGFILMVLAVAGLMFSHSLALFSAAMFVLGLVSGITMSIGTFLITQLYEGRQRGSRLLFTDSFFSMAGMIFPMVAAFLLARSIEWYWVYACIGLVYLAIFILTFGCEFPALGKHAQHSQAPVAKEKWGIGVLFLAVAALCYILGQLGFISWVPEYAKGLGMSLNDAGALVSDFWMSYMFGMWAFSFILRFFDLQRILTVLAGMAAVLMYLFITGTQAHMPWFILTLGFFSSAIYTSIITLGSQQTKVASPKLVNFILTCGTIGTMLTFVVTGPIVAHRGPQAALLTANGLYAVVFVMCFALGFVSRHRQHSAPATH.

12 helical membrane passes run 11 to 31 (WISF…GMVM), 51 to 71 (FLNA…EIVP), 78 to 98 (FGFI…SLAL), 101 to 121 (AAMF…TFLI), 134 to 154 (LLFT…VAAF), 162 to 182 (WYWV…LTFG), 206 to 226 (IGVL…LGFI), 245 to 265 (ALVS…SFIL), 273 to 293 (ILTV…TGTQ), 298 to 318 (WFIL…ITLG), 332 to 352 (FILT…GPIV), and 361 to 381 (LLTA…LGFV).

Belongs to the major facilitator superfamily. TsgA family.

Its subcellular location is the cell inner membrane. This is Protein TsgA from Salmonella gallinarum (strain 287/91 / NCTC 13346).